The sequence spans 550 residues: CTP synthase (550 aa).

The interval Met1 to Met271 is amidoligase domain. Residue Ser13 participates in CTP binding. Position 13 (Ser13) interacts with UTP. Ser14 to Leu19 is a binding site for ATP. Tyr54 contributes to the L-glutamine binding site. Residue Asp71 coordinates ATP. Mg(2+)-binding residues include Asp71 and Glu145. CTP is bound by residues Asp152–Glu154, Lys192–Gln197, and Lys228. UTP is bound by residues Lys192–Gln197 and Lys228. Residues Thr297 to Leu549 enclose the Glutamine amidotransferase type-1 domain. An L-glutamine-binding site is contributed by Gly361. Cys388 functions as the Nucleophile; for glutamine hydrolysis in the catalytic mechanism. Residues Phe389 to Gln392, Glu412, and Arg477 each bind L-glutamine. Residues His522 and Glu524 contribute to the active site.

The protein belongs to the CTP synthase family. Homotetramer.

The catalysed reaction is UTP + L-glutamine + ATP + H2O = CTP + L-glutamate + ADP + phosphate + 2 H(+). The enzyme catalyses L-glutamine + H2O = L-glutamate + NH4(+). It catalyses the reaction UTP + NH4(+) + ATP = CTP + ADP + phosphate + 2 H(+). It participates in pyrimidine metabolism; CTP biosynthesis via de novo pathway; CTP from UDP: step 2/2. Allosterically activated by GTP, when glutamine is the substrate; GTP has no effect on the reaction when ammonia is the substrate. The allosteric effector GTP functions by stabilizing the protein conformation that binds the tetrahedral intermediate(s) formed during glutamine hydrolysis. Inhibited by the product CTP, via allosteric rather than competitive inhibition. Its function is as follows. Catalyzes the ATP-dependent amination of UTP to CTP with either L-glutamine or ammonia as the source of nitrogen. Regulates intracellular CTP levels through interactions with the four ribonucleotide triphosphates. The protein is CTP synthase of Caulobacter sp. (strain K31).